A 332-amino-acid polypeptide reads, in one-letter code: Ferredoxin--NADP reductase (332 aa).

FAD is bound by residues aspartate 33, glutamine 41, tyrosine 46, alanine 86, phenylalanine 120, aspartate 286, and threonine 327.

It belongs to the ferredoxin--NADP reductase type 2 family. Homodimer. It depends on FAD as a cofactor.

The enzyme catalyses 2 reduced [2Fe-2S]-[ferredoxin] + NADP(+) + H(+) = 2 oxidized [2Fe-2S]-[ferredoxin] + NADPH. The protein is Ferredoxin--NADP reductase of Rickettsia bellii (strain OSU 85-389).